We begin with the raw amino-acid sequence, 365 residues long: tRNA/tmRNA (uracil-C(5))-methyltransferase (365 aa).

The S-adenosyl-L-methionine site is built by Q189, Y217, N222, E238, and D298. C323 (nucleophile) is an active-site residue. Residue E357 is the Proton acceptor of the active site.

It belongs to the class I-like SAM-binding methyltransferase superfamily. RNA M5U methyltransferase family. TrmA subfamily.

It carries out the reaction uridine(54) in tRNA + S-adenosyl-L-methionine = 5-methyluridine(54) in tRNA + S-adenosyl-L-homocysteine + H(+). The catalysed reaction is uridine(341) in tmRNA + S-adenosyl-L-methionine = 5-methyluridine(341) in tmRNA + S-adenosyl-L-homocysteine + H(+). Dual-specificity methyltransferase that catalyzes the formation of 5-methyluridine at position 54 (m5U54) in all tRNAs, and that of position 341 (m5U341) in tmRNA (transfer-mRNA). The sequence is that of tRNA/tmRNA (uracil-C(5))-methyltransferase from Shewanella sp. (strain W3-18-1).